Consider the following 199-residue polypeptide: Protein MA_3591 (199 aa).

In terms of domain architecture, AMMECR1 spans 5–196 (TEGRVAVKLA…EKEPEGEVIE (192 aa)).

This chain is Protein MA_3591, found in Methanosarcina acetivorans (strain ATCC 35395 / DSM 2834 / JCM 12185 / C2A).